The chain runs to 319 residues: MTDKPKLHILLCAPRGFCAGVVRAIDAVEQALRLYGAPVYVRHEIVHNKFVVEGLKAKGAIFVEELDEVPDTDKPVIFSAHGVPKSIPAEAQSRNIFAIDATCPLVTKVHREAELHHNNGRQVLLVGHAGHPEVVGTLGQLPEGSILLVQTPGEIETLQVKDEKNLAYVTQTTLSVDDTRNMVEALTKRFPEIIGPHREDICYATTNRQEAVKRIAPIVDALLVVGSSNSSNSQRLREVAERSGCKLARLVLRADDVEWDLFSNISSLGITAGASAPEVLVEEIMAAFAERFELEVETVSTADEGVFFPLPRELRQAAS.

Cys18 lines the [4Fe-4S] cluster pocket. Positions 47 and 81 each coordinate (2E)-4-hydroxy-3-methylbut-2-enyl diphosphate. 2 residues coordinate dimethylallyl diphosphate: His47 and His81. Isopentenyl diphosphate is bound by residues His47 and His81. Cys103 contributes to the [4Fe-4S] cluster binding site. Position 131 (His131) interacts with (2E)-4-hydroxy-3-methylbut-2-enyl diphosphate. His131 lines the dimethylallyl diphosphate pocket. His131 provides a ligand contact to isopentenyl diphosphate. Residue Glu133 is the Proton donor of the active site. Residue Thr172 coordinates (2E)-4-hydroxy-3-methylbut-2-enyl diphosphate. [4Fe-4S] cluster is bound at residue Cys202. (2E)-4-hydroxy-3-methylbut-2-enyl diphosphate is bound by residues Ser230, Ser231, Asn232, and Ser275. Dimethylallyl diphosphate is bound by residues Ser230, Ser231, Asn232, and Ser275. Isopentenyl diphosphate is bound by residues Ser230, Ser231, Asn232, and Ser275.

The protein belongs to the IspH family. It depends on [4Fe-4S] cluster as a cofactor.

The catalysed reaction is isopentenyl diphosphate + 2 oxidized [2Fe-2S]-[ferredoxin] + H2O = (2E)-4-hydroxy-3-methylbut-2-enyl diphosphate + 2 reduced [2Fe-2S]-[ferredoxin] + 2 H(+). The enzyme catalyses dimethylallyl diphosphate + 2 oxidized [2Fe-2S]-[ferredoxin] + H2O = (2E)-4-hydroxy-3-methylbut-2-enyl diphosphate + 2 reduced [2Fe-2S]-[ferredoxin] + 2 H(+). It functions in the pathway isoprenoid biosynthesis; dimethylallyl diphosphate biosynthesis; dimethylallyl diphosphate from (2E)-4-hydroxy-3-methylbutenyl diphosphate: step 1/1. Its pathway is isoprenoid biosynthesis; isopentenyl diphosphate biosynthesis via DXP pathway; isopentenyl diphosphate from 1-deoxy-D-xylulose 5-phosphate: step 6/6. Catalyzes the conversion of 1-hydroxy-2-methyl-2-(E)-butenyl 4-diphosphate (HMBPP) into a mixture of isopentenyl diphosphate (IPP) and dimethylallyl diphosphate (DMAPP). Acts in the terminal step of the DOXP/MEP pathway for isoprenoid precursor biosynthesis. This is 4-hydroxy-3-methylbut-2-enyl diphosphate reductase from Beijerinckia indica subsp. indica (strain ATCC 9039 / DSM 1715 / NCIMB 8712).